The following is a 552-amino-acid chain: Urocanate hydratase (552 aa).

NAD(+)-binding positions include Gly49 to Gly50, Gln127, Gly173 to Gly175, Asp193, Asn239 to Ala240, Gln260 to His264, Tyr270 to Ile271, and Tyr319. Cys407 is an active-site residue. Gly489 is a binding site for NAD(+).

It belongs to the urocanase family. Requires NAD(+) as cofactor.

It is found in the cytoplasm. The catalysed reaction is 4-imidazolone-5-propanoate = trans-urocanate + H2O. Its pathway is amino-acid degradation; L-histidine degradation into L-glutamate; N-formimidoyl-L-glutamate from L-histidine: step 2/3. In terms of biological role, catalyzes the conversion of urocanate to 4-imidazolone-5-propionate. The chain is Urocanate hydratase from Bacillus cereus (strain 03BB102).